We begin with the raw amino-acid sequence, 294 residues long: Lipoprotein NlpI (294 aa).

Positions 1 to 18 are cleaved as a signal peptide; the sequence is MKPFLRWCFVATALTLAG. Residue Cys-19 is the site of N-palmitoyl cysteine attachment. Cys-19 carries S-diacylglycerol cysteine lipidation. 3 TPR repeats span residues 62-95, 96-129, and 234-267; these read AQLL…RPDM, PEVF…DPTY, and SETN…NVHN.

In terms of assembly, homodimer.

The protein localises to the cell membrane. In terms of biological role, may be involved in cell division. May play a role in bacterial septation or regulation of cell wall degradation during cell division. This is Lipoprotein NlpI (nlpI) from Escherichia coli O157:H7.